We begin with the raw amino-acid sequence, 622 residues long: 1-deoxy-D-xylulose-5-phosphate synthase (622 aa).

Residues H80 and 121-123 (GHS) each bind thiamine diphosphate. D152 contacts Mg(2+). Thiamine diphosphate-binding positions include 153-154 (GA), N181, Y288, and E370. A Mg(2+)-binding site is contributed by N181.

Belongs to the transketolase family. DXPS subfamily. In terms of assembly, homodimer. Requires Mg(2+) as cofactor. It depends on thiamine diphosphate as a cofactor.

The catalysed reaction is D-glyceraldehyde 3-phosphate + pyruvate + H(+) = 1-deoxy-D-xylulose 5-phosphate + CO2. It participates in metabolic intermediate biosynthesis; 1-deoxy-D-xylulose 5-phosphate biosynthesis; 1-deoxy-D-xylulose 5-phosphate from D-glyceraldehyde 3-phosphate and pyruvate: step 1/1. Functionally, catalyzes the acyloin condensation reaction between C atoms 2 and 3 of pyruvate and glyceraldehyde 3-phosphate to yield 1-deoxy-D-xylulose-5-phosphate (DXP). The protein is 1-deoxy-D-xylulose-5-phosphate synthase of Shewanella loihica (strain ATCC BAA-1088 / PV-4).